The following is a 504-amino-acid chain: Glutamate--tRNA ligase (504 aa).

The short motif at 25–35 (PSPTGNPHVGL) is the 'HIGH' region element. Cysteine 122, cysteine 124, cysteine 149, and glutamate 151 together coordinate Zn(2+). The 'KMSKS' region motif lies at 270–274 (KLSKR). Lysine 273 provides a ligand contact to ATP.

This sequence belongs to the class-I aminoacyl-tRNA synthetase family. Glutamate--tRNA ligase type 1 subfamily. Monomer. Zn(2+) serves as cofactor.

It localises to the cytoplasm. It catalyses the reaction tRNA(Glu) + L-glutamate + ATP = L-glutamyl-tRNA(Glu) + AMP + diphosphate. Functionally, catalyzes the attachment of glutamate to tRNA(Glu) in a two-step reaction: glutamate is first activated by ATP to form Glu-AMP and then transferred to the acceptor end of tRNA(Glu). The polypeptide is Glutamate--tRNA ligase (Streptomyces avermitilis (strain ATCC 31267 / DSM 46492 / JCM 5070 / NBRC 14893 / NCIMB 12804 / NRRL 8165 / MA-4680)).